The sequence spans 124 residues: Thioredoxin domain-containing protein C21C3.12c (124 aa).

A Thioredoxin domain is found at 37–124; it reads PWCPTVRAAL…ANKFSKFIDI (88 aa). Cys-39 functions as the Nucleophile in the catalytic mechanism.

The protein belongs to the thioredoxin family.

Its subcellular location is the cytoplasm. It is found in the nucleus. The protein is Thioredoxin domain-containing protein C21C3.12c of Schizosaccharomyces pombe (strain 972 / ATCC 24843) (Fission yeast).